We begin with the raw amino-acid sequence, 551 residues long: Dol-P-Man:Man(7)GlcNAc(2)-PP-Dol alpha-1,6-mannosyltransferase (551 aa).

The Lumenal segment spans residues 1–2 (MR). A helical membrane pass occupies residues 3-23 (WSVLDTVLLTVISFHLIQAPF). Over 24 to 61 (TKVEESFNIQAIHDILTYSVFDISQYDHLKFPGVVPRT) the chain is Cytoplasmic. A helical membrane pass occupies residues 62–82 (FVGAVIIAMLSRPYLYLSSLI). Residues 83 to 89 (QTSRPTS) are Lumenal-facing. A helical transmembrane segment spans residues 90-110 (IDVQLVVRGIVGLTNGLSFIY). At 111–136 (LKNCLQDMFDEITEKKKEENEDKDIY) the chain is on the cytoplasmic side. A helical membrane pass occupies residues 137–157 (IYDSAGTWFLLFLIGSFHLMF). At 158–178 (YSTRTLPNFVMTLPLTNVALG) the chain is on the lumenal side. The chain crosses the membrane as a helical span at residues 179–199 (WVLLGRYNAAIFLSALVAIVF). Over 200–202 (RLE) the chain is Cytoplasmic. The chain crosses the membrane as a helical span at residues 203–223 (VSALSAGIALFSVIFKKISLF). Over 224–227 (DAIK) the chain is Lumenal. A helical transmembrane segment spans residues 228–248 (FGIFGLGLGSAISITVDSYFW). Over 249–275 (QEWCLPEVDGFLFNVVAGYASKWGVEP) the chain is Cytoplasmic. Residues 276-296 (VTAYFTHYLRMMFMPPTVLLL) traverse the membrane as a helical segment. The Lumenal segment spans residues 297 to 303 (NYFGYKL). Residues 304 to 324 (APAKLKIVSLASLFHIIVLSF) form a helical membrane-spanning segment. Over 325–331 (QPHKEWR) the chain is Cytoplasmic. The helical transmembrane segment at 332-352 (FIIYAVPSIMLLGATGAAHLW) threads the bilayer. The Lumenal segment spans residues 353 to 365 (ENMKVKKITNVLC). A helical membrane pass occupies residues 366-386 (LAILPLSIMTSFFISMAFLYI). At 387–417 (SRMNYPGGEALTSFNDMIVEKNITNATVHIS) the chain is on the cytoplasmic side. The chain crosses the membrane as a helical span at residues 418–438 (IPPCMTGVTLFGELNYGVYGI). Residues 439–551 (NYDKTENTTL…KRIKQDEKTD (113 aa)) are Lumenal-facing.

Belongs to the glycosyltransferase 22 family.

Its subcellular location is the endoplasmic reticulum membrane. The enzyme catalyses an alpha-D-Man-(1-&gt;2)-alpha-D-Man-(1-&gt;2)-alpha-D-Man-(1-&gt;3)-[alpha-D-Man-(1-&gt;2)-alpha-D-Man-(1-&gt;3)-alpha-D-Man-(1-&gt;6)]-beta-D-Man-(1-&gt;4)-beta-D-GlcNAc-(1-&gt;4)-alpha-D-GlcNAc-diphospho-di-trans,poly-cis-dolichol + a di-trans,poly-cis-dolichyl beta-D-mannosyl phosphate = an alpha-D-Man-(1-&gt;2)-alpha-D-Man-(1-&gt;2)-alpha-D-Man-(1-&gt;3)-[alpha-D-Man-(1-&gt;2)-alpha-D-Man-(1-&gt;3)-[alpha-D-Man-(1-&gt;6)]-alpha-D-Man-(1-&gt;6)]-beta-D-Man-(1-&gt;4)-beta-D-GlcNAc-(1-&gt;4)-alpha-D-GlcNAc-diphospho-di-trans,poly-cis-dolichol + a di-trans,poly-cis-dolichyl phosphate + H(+). The protein operates within protein modification; protein glycosylation. Mannosyltransferase that operates in the biosynthetic pathway of dolichol-linked oligosaccharides, the glycan precursors employed in protein asparagine (N)-glycosylation. The assembly of dolichol-linked oligosaccharides begins on the cytosolic side of the endoplasmic reticulum membrane and finishes in its lumen. The sequential addition of sugars to dolichol pyrophosphate produces dolichol-linked oligosaccharides containing fourteen sugars, including two GlcNAcs, nine mannoses and three glucoses. Once assembled, the oligosaccharide is transferred from the lipid to nascent proteins by oligosaccharyltransferases. In the lumen of the endoplasmic reticulum, adds the eighth mannose residue in an alpha-1,6 linkage onto Man(7)GlcNAc(2)-PP-dolichol to produce Man(8)GlcNAc(2)-PP-dolichol. The chain is Dol-P-Man:Man(7)GlcNAc(2)-PP-Dol alpha-1,6-mannosyltransferase (ALG12) from Saccharomyces cerevisiae (strain ATCC 204508 / S288c) (Baker's yeast).